Consider the following 287-residue polypeptide: Ventral anterior homeobox 1b (287 aa).

Over residues 1–33 (MFEKTRDMDVRCNIEENGRISKPKDNKEIRESQ) the composition is skewed to basic and acidic residues. The tract at residues 1–55 (MFEKTRDMDVRCNIEENGRISKPKDNKEIRESQSKMPSTYPAPGSSEGCAKNKSS) is disordered. The homeobox DNA-binding region spans 89-148 (PKRTRTSFTAEQLYRLEMEFQRCQYVVGRERTELARQLNLSETQVKVWFQNRRTKQKKDQ).

This sequence belongs to the EMX homeobox family.

It localises to the nucleus. Functionally, involved in ventral eye development. The chain is Ventral anterior homeobox 1b (vax1-b) from Xenopus laevis (African clawed frog).